Consider the following 797-residue polypeptide: Interphotoreceptor matrix proteoglycan 1 (797 aa).

The N-terminal stretch at 1–20 (MYLETRRAIFVFWIFLQVQG) is a signal peptide. N-linked (GlcNAc...) asparagine glycosylation is found at asparagine 42, asparagine 143, asparagine 191, and asparagine 215. The 123-residue stretch at 232–354 (EEQRVELSVS…QPEIYLTATD (123 aa)) folds into the SEA 1 domain. 4 O-linked (GalNAc...) threonine glycosylation sites follow: threonine 403, threonine 421, threonine 432, and threonine 442. The region spanning 571–684 (RELVVFFSLR…YSLNIEPADQ (114 aa)) is the SEA 2 domain. 2 N-linked (GlcNAc...) asparagine glycosylation sites follow: asparagine 592 and asparagine 616. The Heparin- and hyaluronan-binding signature appears at 621-629 (KQLEILNFR). Residues asparagine 630 and asparagine 648 are each glycosylated (N-linked (GlcNAc...) asparagine).

The N-terminus is blocked. In terms of processing, highly glycosylated (N- and O-linked carbohydrates and sialic acid). Expressed in the retina (at protein level). In the retina, specifically expressed by cone and rod photoreceptor cells. Localizes to cone and rod photoreceptor cells surrounding the interphotoreceptor matrix of the retina.

It localises to the cell projection. The protein resides in the cilium. The protein localises to the photoreceptor outer segment. It is found in the secreted. Its subcellular location is the extracellular space. It localises to the extracellular matrix. The protein resides in the interphotoreceptor matrix. The protein localises to the photoreceptor inner segment. Its function is as follows. Chondroitin sulfate-, heparin- and hyaluronan-binding protein. May serve to form a basic macromolecular scaffold comprising the insoluble interphotoreceptor matrix. This is Interphotoreceptor matrix proteoglycan 1 from Homo sapiens (Human).